Consider the following 51-residue polypeptide: Large ribosomal subunit protein eL39 (51 aa).

The protein belongs to the eukaryotic ribosomal protein eL39 family.

The polypeptide is Large ribosomal subunit protein eL39 (Pyrobaculum neutrophilum (strain DSM 2338 / JCM 9278 / NBRC 100436 / V24Sta) (Thermoproteus neutrophilus)).